The following is a 964-amino-acid chain: SKI family transcriptional corepressor 1 (964 aa).

Disordered stretches follow at residues 45-72 (TQLGPGREGSSSPNSKQELQPYSGSSAL), 278-365 (RTFS…GGSA), 414-461 (AGEP…WGHQ), 525-587 (AGGG…RKSS), 610-768 (REAY…GAAK), and 794-842 (LCTP…EDGL). Positions 283 to 310 (QGGGGGGANSGSGGAGKGGAGGGGGPGC) are enriched in gly residues. A compositionally biased stretch (low complexity) spans 345-355 (ALGLAAAASGP). Composition is skewed to gly residues over residues 356 to 365 (AGPGGPGGSA) and 417 to 440 (PKGGPGTGSSGGAGTAAGAGGPGA). Residues 571–583 (SLGPLPPPPPPPA) are compositionally biased toward pro residues. Residues 652-661 (DTADEPEVDV) are compositionally biased toward acidic residues. Residues 798–808 (ETHEPDKEDNH) are compositionally biased toward basic and acidic residues. Positions 823 to 834 (DQRSVSQPSPAN) are enriched in polar residues. The stretch at 853 to 921 (EKDIENLARE…DTLCNELDQE (69 aa)) forms a coiled coil.

This sequence belongs to the SKI family. As to quaternary structure, interacts with SMAD1, SMAD2 and SMAD3. Interacts with LBX1. Expressed in brain with higher levels in embryo than adult. Expressed by migratory precursors of Purkinje cells in the postnatal brain. Also expressed in adult testis.

It localises to the nucleus. Its function is as follows. Inhibits BMP signaling. Acts as a transcriptional corepressor of LBX1. In Mus musculus (Mouse), this protein is SKI family transcriptional corepressor 1 (Skor1).